The following is a 247-amino-acid chain: Sortase A (247 aa).

The Cytoplasmic portion of the chain corresponds to 1–9 (MRNKKKLHG). Residues 10 to 30 (FFNFVRWLLVVLLIIVGLALV) form a helical membrane-spanning segment. Topologically, residues 31–247 (FNKPIRNAFI…FSKKYNQINL (217 aa)) are extracellular. His140 (proton donor/acceptor) is an active-site residue. Catalysis depends on Cys206, which acts as the Acyl-thioester intermediate.

The protein belongs to the bacterial sortase family. Class A subfamily.

The protein resides in the cell membrane. Functionally, transpeptidase that anchors surface proteins to the cell wall. Recognizes and modifies its substrate by proteolytic cleavage of a C-terminal sorting signal. Following cleavage, a covalent intermediate is formed via a thioester bond between the sortase and its substrate, which is then transferred and covalently attached to the cell wall. This sortase recognizes a Leu-Pro-x-Thr-Gly (LPXTG) motif, which is cleaved by the sortase between the threonine and glycine residues. Essential for adherence to eukaryotic cells and for binding to fibronectin and fibrinogen. This Streptococcus agalactiae serotype III (strain NEM316) protein is Sortase A.